Reading from the N-terminus, the 422-residue chain is Sphingomyelin phosphodiesterase 2 (422 aa).

Glu-49 serves as a coordination point for Mg(2+). His-272 serves as the catalytic Proton acceptor. 2 consecutive transmembrane segments (helical) span residues 325-345 (ALFG…CVLA) and 354-374 (AIML…VYLF). Positions 397–422 (TETQDLGSEPHPTHCRQQEADRAEEK) are disordered. The span at 412-422 (RQQEADRAEEK) shows a compositional bias: basic and acidic residues.

The protein belongs to the neutral sphingomyelinase family. Mg(2+) is required as a cofactor.

The protein localises to the membrane. It carries out the reaction a sphingomyelin + H2O = phosphocholine + an N-acylsphing-4-enine + H(+). It catalyses the reaction 1-O-octadecyl-sn-glycero-3-phosphocholine + H2O = 1-O-octadecyl-sn-glycerol + phosphocholine + H(+). The enzyme catalyses an N-(acyl)-sphingosylphosphocholine + H2O = an N-acyl-sphingoid base + phosphocholine + H(+). The catalysed reaction is 1-hexadecanoyl-sn-glycero-3-phosphocholine + H2O = 1-hexadecanoyl-sn-glycerol + phosphocholine + H(+). It carries out the reaction a sphingosylphosphocholine + H2O = a sphingoid base + phosphocholine + H(+). It catalyses the reaction 1-O-hexadecyl-sn-glycero-3-phosphocholine + H2O = 1-O-hexadecyl-sn-glycerol + phosphocholine + H(+). Its pathway is lipid metabolism; sphingolipid metabolism. Functionally, catalyzes the hydrolysis of sphingomyelin to form ceramide and phosphocholine. Ceramide mediates numerous cellular functions, such as apoptosis and growth arrest, and is capable of regulating these 2 cellular events independently. Also hydrolyzes sphingosylphosphocholine. Hydrolyze 1-acyl-2-lyso-sn-glycero-3-phosphocholine (lyso-PC) and 1-O-alkyl-2-lyso-sn-glycero-3-phosphocholine (lyso-platelet-activating factor). The protein is Sphingomyelin phosphodiesterase 2 (Smpd2) of Rattus norvegicus (Rat).